The sequence spans 274 residues: Penicillin-insensitive murein endopeptidase (274 aa).

The signal sequence occupies residues 1-19; it reads MKKTVIALLAWFVSSASLA. Cystine bridges form between cysteine 44-cysteine 265, cysteine 187-cysteine 235, and cysteine 216-cysteine 223. 6 residues coordinate Zn(2+): histidine 110, histidine 113, aspartate 120, aspartate 147, histidine 150, and histidine 211. The tract at residues 225–274 is disordered; that stretch reads DQPLPPPGDGCGAELQSWFEPPKPGTTKPEKKTPPPLPPSCQALLDEHVL.

It belongs to the peptidase M74 family. As to quaternary structure, dimer. Zn(2+) serves as cofactor.

Its subcellular location is the periplasm. In terms of biological role, murein endopeptidase that cleaves the D-alanyl-meso-2,6-diamino-pimelyl amide bond that connects peptidoglycan strands. Likely plays a role in the removal of murein from the sacculus. This is Penicillin-insensitive murein endopeptidase from Salmonella paratyphi C (strain RKS4594).